The sequence spans 343 residues: 2-deoxy-scyllo-inosamine dehydrogenase (343 aa).

Zn(2+) is bound by residues Cys37, His59, Cys91, Cys94, Cys97, Cys105, and Glu146.

It belongs to the zinc-containing alcohol dehydrogenase family. DOIA dehydrogenase subfamily. It depends on Zn(2+) as a cofactor.

The enzyme catalyses 2-deoxy-scyllo-inosamine + NADP(+) = 3-amino-2,3-dideoxy-scyllo-inosose + NADPH + H(+). The catalysed reaction is 2-deoxy-scyllo-inosamine + NAD(+) = 3-amino-2,3-dideoxy-scyllo-inosose + NADH + H(+). It participates in metabolic intermediate biosynthesis; 2-deoxystreptamine biosynthesis; 2-deoxystreptamine from D-glucose 6-phosphate: step 3/4. The protein operates within antibiotic biosynthesis; kanamycin biosynthesis. Catalyzes the oxidation of 2-deoxy-scyllo-inosamine (DOIA) with NAD(+) or NADP(+), forming 3-amino-2,3-dideoxy-scyllo-inosose (amino-DOI). In Streptomyces kanamyceticus, this protein is 2-deoxy-scyllo-inosamine dehydrogenase (kanE).